A 299-amino-acid chain; its full sequence is Taste receptor type 2 member 1 (299 aa).

Topologically, residues 1–9 are extracellular; it reads MLESHLIIY. A helical transmembrane segment spans residues 10-30; that stretch reads FLLAVIQFLLGTFTNGIIVVV. Topologically, residues 31-55 are cytoplasmic; the sequence is NGIDLIKHRKMAPLDLLLSCLAVSR. The helical transmembrane segment at 56 to 76 threads the bilayer; that stretch reads IFLQLFIFYINVVVIFLIEFI. At 77–81 the chain is on the extracellular side; the sequence is TCSAS. The helical transmembrane segment at 82-102 threads the bilayer; the sequence is CAFLVFVNELELWLATWLGVF. Residues 103-124 lie on the Cytoplasmic side of the membrane; the sequence is YCAKVASVLHPLFIWLKMRISK. Residues 125–145 traverse the membrane as a helical segment; the sequence is SVPWMILGSLLYVSMICIFHI. Topologically, residues 146-178 are extracellular; sequence KYTGFMVPYFLRNLFFQNATIQTEVKQAIQIFS. Asn-163 carries an N-linked (GlcNAc...) asparagine glycan. Residues 179 to 199 form a helical membrane-spanning segment; the sequence is FVAELLVPLLIFLVAVLLLIF. The Cytoplasmic segment spans residues 200–222; sequence SLGRHTRQMRNTVAGSRVPGRGA. A helical transmembrane segment spans residues 223-243; it reads HISALLSILSFLILYISHYLI. The Extracellular segment spans residues 244-257; the sequence is KTFLSSLKFHVKRF. The helical transmembrane segment at 258-278 threads the bilayer; that stretch reads VFLFCILVIGTYPSGHSLILI. At 279 to 299 the chain is on the cytoplasmic side; sequence LGNPKLKQNTKKFLCHSKCCQ.

This sequence belongs to the G-protein coupled receptor T2R family.

The protein localises to the membrane. Receptor that may play a role in the perception of bitterness and is gustducin-linked. May play a role in sensing the chemical composition of the gastrointestinal content. The activity of this receptor may stimulate alpha gustducin, mediate PLC-beta-2 activation and lead to the gating of TRPM5. In Chlorocebus aethiops (Green monkey), this protein is Taste receptor type 2 member 1 (TAS2R1).